A 159-amino-acid chain; its full sequence is MLYSIGKVVQTHGIKGEVKIKPHTDFDRFVKGFDVIIKDTKYKIQTVREQKDLLLVSFVGYPTLTDVEHLKQQEIYTDEEPLDLESDAFHLPKLIGLKVYDQHNYLIGTVLELVDVPQGYLLRILRDDNGKTVLIPFIDKFIKSVDETSIHIETIEGLI.

Residues 86 to 159 (SDAFHLPKLI…IHIETIEGLI (74 aa)) enclose the PRC barrel domain.

Belongs to the RimM family. In terms of assembly, binds ribosomal protein uS19.

The protein resides in the cytoplasm. Functionally, an accessory protein needed during the final step in the assembly of 30S ribosomal subunit, possibly for assembly of the head region. Essential for efficient processing of 16S rRNA. May be needed both before and after RbfA during the maturation of 16S rRNA. It has affinity for free ribosomal 30S subunits but not for 70S ribosomes. In Acholeplasma laidlawii (strain PG-8A), this protein is Ribosome maturation factor RimM.